The primary structure comprises 102 residues: Small ribosomal subunit protein uS10 (102 aa).

Belongs to the universal ribosomal protein uS10 family. As to quaternary structure, part of the 30S ribosomal subunit.

In terms of biological role, involved in the binding of tRNA to the ribosomes. The polypeptide is Small ribosomal subunit protein uS10 (Tropheryma whipplei (strain TW08/27) (Whipple's bacillus)).